We begin with the raw amino-acid sequence, 1128 residues long: Inactive phospholipase C-like protein 2 (1128 aa).

Residues 1-129 form a disordered region; the sequence is MAECGRGAAG…KKTVSFSSMP (129 aa). Ala2 is subject to N-acetylalanine. Ser16 carries the post-translational modification Phosphoserine. Residues 20–30 are compositionally biased toward low complexity; sequence ALGAKGALKAG. Positions 31-43 are enriched in gly residues; sequence AGEGGGGGGGGRL. Phosphothreonine is present on Thr85. Positions 142 to 252 constitute a PH domain; the sequence is NSMVEGSELK…WVTGLRYLIS (111 aa). The PI-PLC X-box domain occupies 427-571; it reads QDMKQPLSHY…LKGKILIKAK (145 aa). Thr585 bears the Phosphothreonine mark. One can recognise a PI-PLC Y-box domain in the interval 619–735; it reads LSELVSICKS…GYVLRPAIMR (117 aa). One can recognise a C2 domain in the interval 735–864; the sequence is REEVSFFSAN…TGYRHVPLQS (130 aa). Positions 1100-1128 are disordered; sequence KPGTENSEAQKPRRSLEAIPEKASDENGD. Positions 1107–1128 are enriched in basic and acidic residues; the sequence is EAQKPRRSLEAIPEKASDENGD. Ser1114 is modified (phosphoserine).

In terms of tissue distribution, ubiquitously expressed, with a strong expression in skeletal muscle.

It is found in the cytoplasm. Its function is as follows. May play an role in the regulation of Ins(1,4,5)P3 around the endoplasmic reticulum. This chain is Inactive phospholipase C-like protein 2 (Plcl2), found in Mus musculus (Mouse).